The sequence spans 275 residues: 4-diphosphocytidyl-2-C-methyl-D-erythritol kinase (275 aa).

Residue K14 is part of the active site. ATP is bound at residue P98–S108. D140 is an active-site residue.

Belongs to the GHMP kinase family. IspE subfamily.

It carries out the reaction 4-CDP-2-C-methyl-D-erythritol + ATP = 4-CDP-2-C-methyl-D-erythritol 2-phosphate + ADP + H(+). It functions in the pathway isoprenoid biosynthesis; isopentenyl diphosphate biosynthesis via DXP pathway; isopentenyl diphosphate from 1-deoxy-D-xylulose 5-phosphate: step 3/6. In terms of biological role, catalyzes the phosphorylation of the position 2 hydroxy group of 4-diphosphocytidyl-2C-methyl-D-erythritol. The chain is 4-diphosphocytidyl-2-C-methyl-D-erythritol kinase from Francisella tularensis subsp. tularensis (strain WY96-3418).